A 939-amino-acid polypeptide reads, in one-letter code: AP-2 complex subunit alpha (939 aa).

Residues 623-633 (RVPENEIRESK) show a composition bias toward basic and acidic residues. The tract at residues 623 to 660 (RVPENEIRESKSPAPTSGPGSVLQNNVHVNNSHSKLNN) is disordered. Residues 635–660 (PAPTSGPGSVLQNNVHVNNSHSKLNN) show a composition bias toward polar residues.

The protein belongs to the adapter complexes large subunit family. Adaptor protein complex 2 (AP-2) is a heterotetramer composed of two large adaptins (alpha-type and beta-type subunits), a medium adaptin (mu-type subunit AP50) and a small adaptin (sigma-type subunit AP17).

The protein localises to the cell membrane. Its subcellular location is the membrane. It is found in the coated pit. Adaptins are components of the adapter complexes which link clathrin to receptors in coated vesicles. Clathrin-associated protein complexes are believed to interact with the cytoplasmic tails of membrane proteins, leading to their selection and concentration. Alpha adaptin is a subunit of the plasma membrane adapter. This is AP-2 complex subunit alpha from Drosophila pseudoobscura pseudoobscura (Fruit fly).